Here is a 348-residue protein sequence, read N- to C-terminus: tRNA pseudouridine synthase D (348 aa).

Aspartate 84 acts as the Nucleophile in catalysis. The TRUD domain occupies 162-308 (GVPNYFGPQR…ARMDRRPLCL (147 aa)).

This sequence belongs to the pseudouridine synthase TruD family.

The enzyme catalyses uridine(13) in tRNA = pseudouridine(13) in tRNA. Its function is as follows. Responsible for synthesis of pseudouridine from uracil-13 in transfer RNAs. The polypeptide is tRNA pseudouridine synthase D (Chromohalobacter salexigens (strain ATCC BAA-138 / DSM 3043 / CIP 106854 / NCIMB 13768 / 1H11)).